The primary structure comprises 346 residues: 4-hydroxy-3-methylbut-2-enyl diphosphate reductase (346 aa).

Position 19 (cysteine 19) interacts with [4Fe-4S] cluster. Positions 48 and 84 each coordinate (2E)-4-hydroxy-3-methylbut-2-enyl diphosphate. Dimethylallyl diphosphate-binding residues include histidine 48 and histidine 84. 2 residues coordinate isopentenyl diphosphate: histidine 48 and histidine 84. [4Fe-4S] cluster is bound at residue cysteine 106. Residue histidine 134 coordinates (2E)-4-hydroxy-3-methylbut-2-enyl diphosphate. Position 134 (histidine 134) interacts with dimethylallyl diphosphate. Position 134 (histidine 134) interacts with isopentenyl diphosphate. Glutamate 136 functions as the Proton donor in the catalytic mechanism. (2E)-4-hydroxy-3-methylbut-2-enyl diphosphate is bound at residue threonine 175. Position 205 (cysteine 205) interacts with [4Fe-4S] cluster. The (2E)-4-hydroxy-3-methylbut-2-enyl diphosphate site is built by serine 233, serine 234, asparagine 235, and serine 278. Residues serine 233, serine 234, asparagine 235, and serine 278 each contribute to the dimethylallyl diphosphate site. Positions 233, 234, 235, and 278 each coordinate isopentenyl diphosphate.

It belongs to the IspH family. The cofactor is [4Fe-4S] cluster.

It carries out the reaction isopentenyl diphosphate + 2 oxidized [2Fe-2S]-[ferredoxin] + H2O = (2E)-4-hydroxy-3-methylbut-2-enyl diphosphate + 2 reduced [2Fe-2S]-[ferredoxin] + 2 H(+). It catalyses the reaction dimethylallyl diphosphate + 2 oxidized [2Fe-2S]-[ferredoxin] + H2O = (2E)-4-hydroxy-3-methylbut-2-enyl diphosphate + 2 reduced [2Fe-2S]-[ferredoxin] + 2 H(+). It functions in the pathway isoprenoid biosynthesis; dimethylallyl diphosphate biosynthesis; dimethylallyl diphosphate from (2E)-4-hydroxy-3-methylbutenyl diphosphate: step 1/1. Its pathway is isoprenoid biosynthesis; isopentenyl diphosphate biosynthesis via DXP pathway; isopentenyl diphosphate from 1-deoxy-D-xylulose 5-phosphate: step 6/6. Its function is as follows. Catalyzes the conversion of 1-hydroxy-2-methyl-2-(E)-butenyl 4-diphosphate (HMBPP) into a mixture of isopentenyl diphosphate (IPP) and dimethylallyl diphosphate (DMAPP). Acts in the terminal step of the DOXP/MEP pathway for isoprenoid precursor biosynthesis. In Brucella melitensis biotype 1 (strain ATCC 23456 / CCUG 17765 / NCTC 10094 / 16M), this protein is 4-hydroxy-3-methylbut-2-enyl diphosphate reductase.